Here is a 147-residue protein sequence, read N- to C-terminus: MSSPEGSSVTFRRAPATLRRPAIERFARRLQKEVADGAPFDTLITGDAELRRLNRDFRKKDYATDVLSFPSGGPGLGDLAISLGRARAQAREFGHTIEQEISILMLHGVLHLLGHDHEVDRGRMASLEKRWRAKLGLPTGLIERVQS.

Zn(2+) contacts are provided by histidine 107, histidine 111, and histidine 117.

It belongs to the endoribonuclease YbeY family. Zn(2+) serves as cofactor.

The protein resides in the cytoplasm. Single strand-specific metallo-endoribonuclease involved in late-stage 70S ribosome quality control and in maturation of the 3' terminus of the 16S rRNA. This chain is Endoribonuclease YbeY, found in Solibacter usitatus (strain Ellin6076).